A 586-amino-acid polypeptide reads, in one-letter code: ATPase family AAA domain-containing protein 3A (586 aa).

Disordered stretches follow at residues 1–55 (MSWL…PTGL) and 111–134 (QAEE…QYQD). N-acetylserine is present on serine 2. The tract at residues 2–50 (SWLFGINKGPKGEGAGPPPPLPPAQPGAEGGGDRGLGDRPAPKDKWSNF) is required for interaction with the inner surface of the mitochondrial outer membrane. Residues 2–246 (SWLFGINKGP…FRAFVTDWDK (245 aa)) lie on the Mitochondrial intermembrane side of the membrane. A compositionally biased stretch (pro residues) spans 17 to 26 (GPPPPLPPAQ). Composition is skewed to basic and acidic residues over residues 32-48 (GGDR…DKWS) and 111-125 (QAEE…ETRQ). A coiled-coil region spans residues 86–219 (QLEQQSKLKE…QIRLKAAEHR (134 aa)). The helical transmembrane segment at 247 to 264 (VTATVAGLTLLAVGVYSA) threads the bilayer. Topologically, residues 265–586 (KNATLVAGRF…PGRGDEPSPS (322 aa)) are mitochondrial matrix. Residues 290–305 (RITVLEALRHPIQVSR) form an S100B-binding region. At serine 321 the chain carries Phosphoserine. 352-359 (GPPGTGKT) is a binding site for ATP. Lysine 491 bears the N6-acetyllysine mark.

Belongs to the AAA ATPase family. In terms of assembly, can form homooligomers. Homodimer formation at the N-terminus may be regulated by ATP and is required for the interaction with the inner surface of the mitochondrial outer membrane and correct mitochondrial homeostasis. Interacts with components of the mitochondrial ribosome and with other proteins involved in mitochondrial RNA metabolism. May also interact with protein involved in lipid metabolism, including STARD9. May interact with FAM210A. Interacts with GADD45GIP1. Interacts with S100B in a Ca(+2)- and Zn(+2)-dependent manner; this interaction probably occurs in the cytosol prior to mitochondrial targeting. S100B could assist ATAD3A cytoplasmic processing, preventing aggregation and favoring mitochondrial localization. Interacts with HSP60/HSPD1. Forms heterooligomers with ATAD3B; this interaction may affect ATAD3A activity. Interacts with CLPB. Interacts with EIF2AK3/PERK; ATAD3A and EIF2S1/eIF-2-alpha occupy a common binding site within the cytoplasmic loop of EIF2AK3/PERK, leading to prevent EIF2AK3/PERK association with its substrate EIF2S1/eIF-2-alpha. In terms of tissue distribution, overexpressed in lung adenocarcinomas (at protein level).

Its subcellular location is the mitochondrion inner membrane. The protein resides in the mitochondrion matrix. It is found in the mitochondrion nucleoid. It catalyses the reaction ATP + H2O = ADP + phosphate + H(+). In terms of biological role, essential for mitochondrial network organization, mitochondrial metabolism and cell growth at organism and cellular level. May play an important role in mitochondrial protein synthesis. May also participate in mitochondrial DNA replication. May bind to mitochondrial DNA D-loops and contribute to nucleoid stability. Required for enhanced channeling of cholesterol for hormone-dependent steroidogenesis. Involved in mitochondrial-mediated antiviral innate immunity. Required to protect mitochondria from the PERK-mediated unfolded protein response: specifically inhibits the activity of EIF2AK3/PERK at mitochondria-endoplasmic reticulum contact sites, thereby providing a safe haven for mitochondrial protein translation during endoplasmic reticulum stress. Ability to inhibit EIF2AK3/PERK is independent of its ATPase activity. Also involved in the mitochondrial DNA damage response by promoting signaling between damaged genomes and the mitochondrial membrane, leading to activation of the integrated stress response (ISR). The sequence is that of ATPase family AAA domain-containing protein 3A from Homo sapiens (Human).